The primary structure comprises 257 residues: uncharacterized protein (257 aa).

The span at 74 to 83 shows a compositional bias: basic and acidic residues; the sequence is LKDDLTRDNS. Disordered regions lie at residues 74–115 and 209–257; these read LKDD…TQKR and PYLN…YDSF. The segment covering 100-113 has biased composition (polar residues); sequence SFQNMNSSMPSSTQ. The span at 216-236 shows a compositional bias: acidic residues; that stretch reads SEDDTDSSIVEVETDYSEEEK.

It belongs to the asfivirus DP238L family.

This is an uncharacterized protein from Ornithodoros (relapsing fever ticks).